The chain runs to 249 residues: Probable transcriptional regulatory protein ERGA_CDS_03720 (249 aa).

The interval 1–21 (MAGHSQFANIKHRKGAQDAKR) is disordered.

It belongs to the TACO1 family.

The protein resides in the cytoplasm. The sequence is that of Probable transcriptional regulatory protein ERGA_CDS_03720 from Ehrlichia ruminantium (strain Gardel).